Reading from the N-terminus, the 467-residue chain is Asparagine--tRNA ligase (467 aa).

The protein belongs to the class-II aminoacyl-tRNA synthetase family. In terms of assembly, homodimer.

It is found in the cytoplasm. The catalysed reaction is tRNA(Asn) + L-asparagine + ATP = L-asparaginyl-tRNA(Asn) + AMP + diphosphate + H(+). This is Asparagine--tRNA ligase from Protochlamydia amoebophila (strain UWE25).